The chain runs to 3387 residues: Genome polyprotein (3387 aa).

The Cytoplasmic segment spans residues 1–100 (MNQRKKVARP…LNILNGRKRS (100 aa)). The hydrophobic; homodimerization of capsid protein C stretch occupies residues 36 to 71 (LFSGKGPLRMVLAFITFLRVLSIPPTAGILKRWGQL). The propeptide at 100-113 (STITLLCLIPTVMA) is ER anchor for the capsid protein C, removed in mature form by serine protease NS3. The chain crosses the membrane as a helical span at residues 101 to 117 (TITLLCLIPTVMAFHLS). Residues 118–237 (TRDGEPLMIV…GAWKHAQRVE (120 aa)) are Extracellular-facing. Asn182 carries N-linked (GlcNAc...) asparagine; by host glycosylation. Residues 238 to 258 (SWILRNPGFALLAGFMAYMIG) traverse the membrane as a helical segment. The Cytoplasmic portion of the chain corresponds to 259–265 (QTGIQRT). A helical transmembrane segment spans residues 266-279 (VFFILMMLVAPSYG). Topologically, residues 280–725 (MRCVGVGNRD…HQVFGSVYTT (446 aa)) are extracellular. 4 cysteine pairs are disulfide-bonded: Cys282/Cys309, Cys339/Cys400, Cys353/Cys384, and Cys371/Cys395. An N-linked (GlcNAc...) asparagine; by host glycan is attached at Asn346. The tract at residues 377–390 (DRGWGNGCGLFGKG) is fusion peptide. Asn432 carries an N-linked (GlcNAc...) asparagine; by host glycan. Cystine bridges form between Cys464/Cys564 and Cys581/Cys612. A helical transmembrane segment spans residues 726–746 (MFGGVSWMVRILIGLLVLWIG). Residues 747 to 753 (TNSRNTS) lie on the Cytoplasmic side of the membrane. A helical transmembrane segment spans residues 754 to 774 (MAMSCIAVGGITLFLGFTVHA). The Extracellular portion of the chain corresponds to 775–1194 (DMGCAVSWSG…MLGDTMSGRM (420 aa)). Disulfide bonds link Cys778-Cys789, Cys829-Cys917, Cys953-Cys997, Cys1054-Cys1103, Cys1065-Cys1087, and Cys1086-Cys1090. N-linked (GlcNAc...) asparagine; by host glycans are attached at residues Asn904 and Asn981. Residues 1195-1218 (GGQIHLAIMAVFKMSPGYVLGIFL) form a helical membrane-spanning segment. The Lumenal segment spans residues 1219-1224 (RKLTSR). A helical transmembrane segment spans residues 1225 to 1243 (ETALMVIGMAMTTVLSIPH). At 1244-1267 (DLMEFIDGISLGLILLKMVTHFDN) the chain is on the cytoplasmic side. Residues 1268-1288 (TQVGTLALSLTFIKSTMPLVM) traverse the membrane as a helical segment. A topological domain (lumenal) is located at residue Ala1289. A helical membrane pass occupies residues 1290-1308 (WRTIMAVLFVVTLIPLCRT). Residues 1309 to 1316 (SCLQKQSH) lie on the Lumenal side of the membrane. The chain crosses the membrane as a helical span at residues 1317-1337 (WVEITALILGAQALPVYLMTL). Topologically, residues 1338–1345 (MKGASKRS) are cytoplasmic. Residues 1346-1366 (WPLNEGIMAVGLVSLLGSALL) form a helical membrane-spanning segment. Residues 1367–1369 (KND) lie on the Lumenal side of the membrane. Residues 1370–1390 (VPLAGPMVAGGLLLAAYVMSG) form a helical membrane-spanning segment. Over 1391 to 1437 (SSADLSLEKAANVQWDEMADITGSSPIIEVKQDEDGSFSIRDVEETN) the chain is Cytoplasmic. The interval 1397 to 1436 (LEKAANVQWDEMADITGSSPIIEVKQDEDGSFSIRDVEET) is interacts with and activates NS3 protease. The segment at residues 1438–1458 (MITLLVKLALITVSGLYPLAI) is an intramembrane region (helical). The Cytoplasmic segment spans residues 1459–2143 (PVTMTLWYMW…QHALNELPES (685 aa)). The Peptidase S7 domain maps to 1475-1652 (SGALWDVPSP…ERIGEPDYEV (178 aa)). Catalysis depends on charge relay system; for serine protease NS3 activity residues His1525, Asp1549, and Ser1609. The Helicase ATP-binding domain occupies 1654 to 1810 (EDIFRKKRLT…QSNSPIEDIE (157 aa)). Positions 1658-1661 (RKKR) are important for RNA-binding. 1667-1674 (LHPGAGKT) contacts ATP. Positions 1758-1761 (DEAH) match the DEAH box motif. The 168-residue stretch at 1820–1987 (TGFDWITDYQ…IIPTLFGPER (168 aa)) folds into the Helicase C-terminal domain. Lys1862 carries the post-translational modification N6-acetyllysine; by host. The chain crosses the membrane as a helical span at residues 2144–2164 (LETLMLVALLGAMTAGIFLFF). The Lumenal portion of the chain corresponds to 2165-2169 (MQGKG). Positions 2170–2190 (IGKLSMGLIAIAVASGLLWVA) form an intramembrane region, helical. Position 2191 (Glu2191) is a topological domain, lumenal. The chain crosses the membrane as a helical span at residues 2192–2212 (IQPQWIAASIILEFFLMVLLV). At 2213 to 2225 (PEPEKQRTPQDNQ) the chain is on the cytoplasmic side. A helical transmembrane segment spans residues 2226-2246 (LIYVILTILTIIALVAANEMG). Residues 2247–2270 (LIEKTKTDFGFYQAKTETTILDVD) are Lumenal-facing. An intramembrane region (helical) is located at residues 2271 to 2291 (LRPASAWTLYAVATTILTPML). Topologically, residues 2292–2301 (RHTIENTSAN) are lumenal. N-linked (GlcNAc...) asparagine; by host glycans are attached at residues Asn2297 and Asn2301. The helical intramembrane region spans 2302–2322 (LSLAAIANQAAVLMGLGKGWP). The Lumenal portion of the chain corresponds to 2323-2343 (LHRMDLGVPLLAMGCYSQVNP). The chain crosses the membrane as a helical span at residues 2344–2364 (TTLTASLVMLLVHYAIIGPGL). Topologically, residues 2365-2409 (QAKATREAQKRTAAGIMKNPTVDGITVIDLEPISYDPKFEKQLGQ) are cytoplasmic. A helical membrane pass occupies residues 2410–2430 (VMLLVLCAGQLLLMRTTWAFC). Topologically, residues 2431-2455 (EVLTLATGPILTLWEGNPGRFWNTT) are lumenal. Asn2453 is a glycosylation site (N-linked (GlcNAc...) asparagine; by host). The chain crosses the membrane as a helical span at residues 2456–2476 (IAVSTANIFRGSYLAGAGLAF). Topologically, residues 2477 to 3387 (SLIKNAQTPR…SAHFESEGVL (911 aa)) are cytoplasmic. The mRNA cap 0-1 NS5-type MT domain occupies 2489–2751 (TGTTGETLGE…DADLGAGTRS (263 aa)). Ser2543 serves as a coordination point for S-adenosyl-L-methionine. Ser2543 carries the post-translational modification Phosphoserine. Lys2548 acts as the For 2'-O-MTase activity in catalysis. Residues 2564–2567 (VVDL) carry the SUMO-interacting motif motif. The S-adenosyl-L-methionine site is built by Gly2573, Trp2574, Thr2591, Lys2592, Asp2618, and Val2619. The active-site For 2'-O-MTase activity is the Asp2633. An S-adenosyl-L-methionine-binding site is contributed by Ile2634. Active-site for 2'-O-MTase activity residues include Lys2668 and Glu2704. Tyr2706 serves as a coordination point for S-adenosyl-L-methionine. Zn(2+) contacts are provided by Glu2925, His2929, Cys2934, and Cys2937. Residues 3016 to 3166 (LIYADDTAGW…PLDERFSTSL (151 aa)) enclose the RdRp catalytic domain. Zn(2+) is bound by residues His3200, Cys3216, and Cys3335.

In the N-terminal section; belongs to the class I-like SAM-binding methyltransferase superfamily. mRNA cap 0-1 NS5-type methyltransferase family. In terms of assembly, homodimer. Interacts (via N-terminus) with host EXOC1 (via C-terminus); this interaction results in EXOC1 degradation through the proteasome degradation pathway. Forms heterodimers with envelope protein E in the endoplasmic reticulum and Golgi. As to quaternary structure, homodimer; in the endoplasmic reticulum and Golgi. Interacts with protein prM. Interacts with non-structural protein 1. In terms of assembly, homodimer; Homohexamer when secreted. Interacts with envelope protein E. Interacts (via N-terminus) with serine protease NS3. As to quaternary structure, forms a heterodimer with serine protease NS3. May form homooligomers. In terms of assembly, forms a heterodimer with NS2B. Interacts with NS4B. Interacts with unphosphorylated RNA-directed RNA polymerase NS5; this interaction stimulates RNA-directed RNA polymerase NS5 guanylyltransferase activity. Interacts with host SHFL. Interacts with host MAVS; this interaction inhibits the synthesis of IFN-beta. Interacts with host SHFL. Interacts with host AUP1; the interaction occurs in the presence of Dengue virus NS4B and induces lipophagy which facilitates production of virus progeny particles. As to quaternary structure, interacts with serine protease NS3. In terms of assembly, homodimer. Interacts with host STAT2; this interaction inhibits the phosphorylation of the latter, and, when all viral proteins are present (polyprotein), targets STAT2 for degradation. Interacts with serine protease NS3. Interacts with host PAF1 complex; the interaction may prevent the recruitment of the PAF1 complex to interferon-responsive genes, and thus reduces the immune response. Post-translationally, specific enzymatic cleavages in vivo yield mature proteins. Cleavages in the lumen of endoplasmic reticulum are performed by host signal peptidase, whereas cleavages in the cytoplasmic side are performed by serine protease NS3. Signal cleavage at the 2K-4B site requires a prior NS3 protease-mediated cleavage at the 4A-2K site. In terms of processing, cleaved in post-Golgi vesicles by a host furin, releasing the mature small envelope protein M, and peptide pr. This cleavage is incomplete as up to 30% of viral particles still carry uncleaved prM. N-glycosylated. Post-translationally, N-glycosylated. The excreted form is glycosylated and this is required for efficient secretion of the protein from infected cells. In terms of processing, acetylated by host KAT5. Acetylation modulates NS3 RNA-binding and unwinding activities and plays an important positive role for viral replication. Sumoylation of RNA-directed RNA polymerase NS5 increases NS5 protein stability allowing proper viral RNA replication. Post-translationally, phosphorylated on serines residues. This phosphorylation may trigger NS5 nuclear localization.

It is found in the virion. The protein localises to the host nucleus. It localises to the host cytoplasm. The protein resides in the host perinuclear region. Its subcellular location is the secreted. It is found in the virion membrane. The protein localises to the host endoplasmic reticulum membrane. It localises to the host mitochondrion. It catalyses the reaction Selective hydrolysis of -Xaa-Xaa-|-Yaa- bonds in which each of the Xaa can be either Arg or Lys and Yaa can be either Ser or Ala.. The enzyme catalyses RNA(n) + a ribonucleoside 5'-triphosphate = RNA(n+1) + diphosphate. It carries out the reaction a ribonucleoside 5'-triphosphate + H2O = a ribonucleoside 5'-diphosphate + phosphate + H(+). The catalysed reaction is ATP + H2O = ADP + phosphate + H(+). It catalyses the reaction a 5'-end (5'-triphosphoguanosine)-ribonucleoside in mRNA + S-adenosyl-L-methionine = a 5'-end (N(7)-methyl 5'-triphosphoguanosine)-ribonucleoside in mRNA + S-adenosyl-L-homocysteine. The enzyme catalyses a 5'-end (N(7)-methyl 5'-triphosphoguanosine)-ribonucleoside in mRNA + S-adenosyl-L-methionine = a 5'-end (N(7)-methyl 5'-triphosphoguanosine)-(2'-O-methyl-ribonucleoside) in mRNA + S-adenosyl-L-homocysteine + H(+). Plays a role in virus budding by binding to the cell membrane and gathering the viral RNA into a nucleocapsid that forms the core of a mature virus particle. During virus entry, may induce genome penetration into the host cytoplasm after hemifusion induced by the surface proteins. Can migrate to the cell nucleus where it modulates host functions. Overcomes the anti-viral effects of host EXOC1 by sequestering and degrading the latter through the proteasome degradation pathway. Its function is as follows. Inhibits RNA silencing by interfering with host Dicer. In terms of biological role, prevents premature fusion activity of envelope proteins in trans-Golgi by binding to envelope protein E at pH6.0. After virion release in extracellular space, gets dissociated from E dimers. Functionally, acts as a chaperone for envelope protein E during intracellular virion assembly by masking and inactivating envelope protein E fusion peptide. prM is the only viral peptide matured by host furin in the trans-Golgi network probably to avoid catastrophic activation of the viral fusion activity in acidic Golgi compartment prior to virion release. prM-E cleavage is inefficient, and many virions are only partially matured. These uncleaved prM would play a role in immune evasion. May play a role in virus budding. Exerts cytotoxic effects by activating a mitochondrial apoptotic pathway through M ectodomain. May display a viroporin activity. Its function is as follows. Binds to host cell surface receptor and mediates fusion between viral and cellular membranes. Envelope protein is synthesized in the endoplasmic reticulum in the form of heterodimer with protein prM. They play a role in virion budding in the ER, and the newly formed immature particle is covered with 60 spikes composed of heterodimer between precursor prM and envelope protein E. The virion is transported to the Golgi apparatus where the low pH causes dissociation of PrM-E heterodimers and formation of E homodimers. prM-E cleavage is inefficient, and many virions are only partially matured. These uncleaved prM would play a role in immune evasion. In terms of biological role, involved in immune evasion, pathogenesis and viral replication. Once cleaved off the polyprotein, is targeted to three destinations: the viral replication cycle, the plasma membrane and the extracellular compartment. Essential for viral replication. Required for formation of the replication complex and recruitment of other non-structural proteins to the ER-derived membrane structures. Excreted as a hexameric lipoparticle that plays a role against host immune response. Antagonizing the complement function. Binds to the host macrophages and dendritic cells. Inhibits signal transduction originating from Toll-like receptor 3 (TLR3). Functionally, disrupts the host endothelial glycocalyx layer of host pulmonary microvascular endothelial cells, inducing degradation of sialic acid and shedding of heparan sulfate proteoglycans. NS1 induces expression of sialidases, heparanase, and activates cathepsin L, which activates heparanase via enzymatic cleavage. These effects are probably linked to the endothelial hyperpermeability observed in severe dengue disease. Component of the viral RNA replication complex that functions in virion assembly and antagonizes the host immune response. Its function is as follows. Required cofactor for the serine protease function of NS3. May have membrane-destabilizing activity and form viroporins. In terms of biological role, displays three enzymatic activities: serine protease, NTPase and RNA helicase. NS3 serine protease, in association with NS2B, performs its autocleavage and cleaves the polyprotein at dibasic sites in the cytoplasm: C-prM, NS2A-NS2B, NS2B-NS3, NS3-NS4A, NS4A-2K and NS4B-NS5. NS3 RNA helicase binds RNA and unwinds dsRNA in the 3' to 5' direction. Functionally, regulates the ATPase activity of the NS3 helicase activity. NS4A allows NS3 helicase to conserve energy during unwinding. Plays a role in the inhibition of the host innate immune response. Interacts with host MAVS and thereby prevents the interaction between RIGI and MAVS. In turn, IFN-beta production is impaired. Interacts with host AUP1 which mediates induction of lipophagy in host cells and facilitates production of virus progeny particles. Functions as a signal peptide for NS4B and is required for the interferon antagonism activity of the latter. Its function is as follows. Induces the formation of ER-derived membrane vesicles where the viral replication takes place. Inhibits interferon (IFN)-induced host STAT1 phosphorylation and nuclear translocation, thereby preventing the establishment of cellular antiviral state by blocking the IFN-alpha/beta pathway. In terms of biological role, replicates the viral (+) and (-) RNA genome, and performs the capping of genomes in the cytoplasm. NS5 methylates viral RNA cap at guanine N-7 and ribose 2'-O positions. Besides its role in RNA genome replication, also prevents the establishment of cellular antiviral state by blocking the interferon-alpha/beta (IFN-alpha/beta) signaling pathway. Inhibits host TYK2 and STAT2 phosphorylation, thereby preventing activation of JAK-STAT signaling pathway. May reduce immune responses by preventing the recruitment of the host PAF1 complex to interferon-responsive genes. In Dengue virus type 4 (strain Thailand/0348/1991) (DENV-4), this protein is Genome polyprotein.